We begin with the raw amino-acid sequence, 217 residues long: MGKNFYSIMLSLAGICQSIVLVNQLSETGECHSKSFEICIDSMLNLYPTTVLSIYGNKEKNLKLGITTLMSLLNVNAILKCKNSIKMIRYIFNLITLENRLENNIKYKNILFKELSILIQQHKNRVYTYDLLADRLAQIYLDTVSKLGFRIQVSGSKKVLHNIVIQNKIRCILLSGIRATMLWKQIGGRRYQFVFYRNSIFHYADMILKKINDTKYS.

This sequence belongs to the HflD family.

It is found in the cytoplasm. The protein localises to the cell membrane. This chain is High frequency lysogenization protein HflD homolog, found in Buchnera aphidicola subsp. Baizongia pistaciae (strain Bp).